A 256-amino-acid polypeptide reads, in one-letter code: Low molecular mass lipoprotein 3 (256 aa).

An N-terminal signal peptide occupies residues 1–17; it reads MKPAIVILCLFVASLYA.

The protein belongs to the 30 kDa lipoprotein family. In terms of tissue distribution, detected in larval hemolymph (at protein level).

It localises to the secreted. The protein is Low molecular mass lipoprotein 3 of Bombyx mori (Silk moth).